Consider the following 192-residue polypeptide: Casparian strip membrane protein 1 (192 aa).

Topologically, residues 1–26 (MTKSVRLEEGDASKVLVPVGSNKGVS) are cytoplasmic. The helical transmembrane segment at 27–47 (VMDLVLRLVGIAGTLGAAIAM) threads the bilayer. The Extracellular segment spans residues 48 to 75 (GTNEQTLPFFTRFVVFNAEYDDFRSFRL). A helical membrane pass occupies residues 76–96 (FVIVNAIVCAYFVLTLPLSIV). At 97–107 (HIMRSAARGSR) the chain is on the cytoplasmic side. The chain crosses the membrane as a helical span at residues 108-128 (ILLIIMDTVMLALLTAGASAA). Topologically, residues 129 to 161 (ASIVYLAHNGNTSTNWLPVCQQYGDFCQGASGS) are extracellular. Residue Asn139 is glycosylated (N-linked (GlcNAc...) asparagine). A helical membrane pass occupies residues 162–182 (LIGSFGAVVVFILIILLGAIA). Over 183-192 (LSRHAKRVVL) the chain is Cytoplasmic.

The protein belongs to the Casparian strip membrane proteins (CASP) family. As to quaternary structure, homodimer and heterodimers.

It is found in the cell membrane. In terms of biological role, regulates membrane-cell wall junctions and localized cell wall deposition. Required for establishment of the Casparian strip membrane domain (CSD) and the subsequent formation of Casparian strips, a cell wall modification of the root endodermis that determines an apoplastic barrier between the intraorganismal apoplasm and the extraorganismal apoplasm and prevents lateral diffusion. This is Casparian strip membrane protein 1 from Lactuca saligna (Willowleaf lettuce).